Here is a 344-residue protein sequence, read N- to C-terminus: Heat-inducible transcription repressor HrcA (344 aa).

Belongs to the HrcA family.

In terms of biological role, negative regulator of class I heat shock genes (grpE-dnaK-dnaJ and groELS operons). Prevents heat-shock induction of these operons. This is Heat-inducible transcription repressor HrcA from Streptococcus pyogenes serotype M6 (strain ATCC BAA-946 / MGAS10394).